A 239-amino-acid polypeptide reads, in one-letter code: Venom nerve growth factor (239 aa).

Positions 1 to 18 (MSMLCYTLIIAFLIGIWA) are cleaved as a signal peptide. A propeptide spanning residues 19–125 (APKSEDNVPL…ALNRNIQAKR (107 aa)) is cleaved from the precursor. Residues 47–66 (GLKTSRNTDQRHPAPKKADD) show a composition bias toward basic and acidic residues. Residues 47–68 (GLKTSRNTDQRHPAPKKADDQE) form a disordered region. 3 disulfides stabilise this stretch: Cys139-Cys203, Cys181-Cys231, and Cys191-Cys233.

It belongs to the NGF-beta family. As to quaternary structure, homodimer; non-covalently linked. As to expression, expressed by the venom gland.

The protein localises to the secreted. In terms of biological role, nerve growth factor is important for the development and maintenance of the sympathetic and sensory nervous systems. It stimulates division and differentiation of sympathetic and embryonic sensory neurons as well as basal forebrain cholinergic neurons in the brain. Its relevance in the snake venom is not clear. However, it has been shown to inhibit metalloproteinase-dependent proteolysis of platelet glycoprotein Ib alpha, suggesting a metalloproteinase inhibition to prevent metalloprotease autodigestion and/or protection against prey proteases. Binds a lipid between the two protein chains in the homodimer. The lipid-bound form promotes histamine relase from mouse mast cells, contrary to the lipid-free form. In Pseudechis porphyriacus (Red-bellied black snake), this protein is Venom nerve growth factor.